Consider the following 96-residue polypeptide: Co-chaperonin GroES 2 (96 aa).

Belongs to the GroES chaperonin family. As to quaternary structure, heptamer of 7 subunits arranged in a ring. Interacts with the chaperonin GroEL.

Its subcellular location is the cytoplasm. In terms of biological role, together with the chaperonin GroEL, plays an essential role in assisting protein folding. The GroEL-GroES system forms a nano-cage that allows encapsulation of the non-native substrate proteins and provides a physical environment optimized to promote and accelerate protein folding. GroES binds to the apical surface of the GroEL ring, thereby capping the opening of the GroEL channel. This Vibrio vulnificus (strain CMCP6) protein is Co-chaperonin GroES 2.